We begin with the raw amino-acid sequence, 118 residues long: Cytochrome b-c1 complex subunit 7 (118 aa).

Residues 1–32 (MVHLTKTLRFINNPGFRKFYYGLQGYNKYGLY) form an igE-binding. Immunodominant epitope; induces specific IgE antibody production in mice. Causes degranulation of rat basophilic leukemia (RBL) cells and the release of beta-hexosaminidase from them region.

This sequence belongs to the UQCRB/QCR7 family. As to quaternary structure, component of the ubiquinol-cytochrome c oxidoreductase (cytochrome b-c1 complex, complex III, CIII), a multisubunit enzyme composed of 3 respiratory subunits cytochrome b, cytochrome c1 and Rieske protein, 2 core protein subunits, and additional low-molecular weight protein subunits. The complex exists as an obligatory dimer and forms supercomplexes (SCs) in the inner mitochondrial membrane with cytochrome c oxidase (complex IV, CIV).

Its subcellular location is the mitochondrion inner membrane. Its function is as follows. Component of the ubiquinol-cytochrome c oxidoreductase, a multisubunit transmembrane complex that is part of the mitochondrial electron transport chain which drives oxidative phosphorylation. The respiratory chain contains 3 multisubunit complexes succinate dehydrogenase (complex II, CII), ubiquinol-cytochrome c oxidoreductase (cytochrome b-c1 complex, complex III, CIII) and cytochrome c oxidase (complex IV, CIV), that cooperate to transfer electrons derived from NADH and succinate to molecular oxygen, creating an electrochemical gradient over the inner membrane that drives transmembrane transport and the ATP synthase. The cytochrome b-c1 complex catalyzes electron transfer from ubiquinol to cytochrome c, linking this redox reaction to translocation of protons across the mitochondrial inner membrane, with protons being carried across the membrane as hydrogens on the quinol. In the process called Q cycle, 2 protons are consumed from the matrix, 4 protons are released into the intermembrane space and 2 electrons are passed to cytochrome c. The protein is Cytochrome b-c1 complex subunit 7 of Dermatophagoides farinae (American house dust mite).